The chain runs to 92 residues: Non-specific lipid-transfer protein A (92 aa).

Disulfide bonds link cysteine 3-cysteine 51, cysteine 13-cysteine 28, cysteine 29-cysteine 74, and cysteine 49-cysteine 88.

Belongs to the plant LTP family.

Its function is as follows. Plant non-specific lipid-transfer proteins transfer phospholipids as well as galactolipids across membranes. May play a role in wax or cutin deposition in the cell walls of expanding epidermal cells and certain secretory tissues. This is Non-specific lipid-transfer protein A from Ricinus communis (Castor bean).